The sequence spans 214 residues: DELTA-actitoxin-Aeq1b (214 aa).

The signal sequence occupies residues 1-19; sequence MSRLIIVFIVVTMICAATA. The propeptide occupies 20 to 35; sequence LSSKKSINEDEKDEKR. Residues 38 to 47 are plays an important role in the hemolytic activity; it reads AVAGAVIEGA. An N-terminal region region spans residues 46 to 65; sequence GATLTFNVLQTVLKALGDIS. The phosphocholine site is built by S89, V122, S140, P142, Y168, Y172, and Y173. Residues 140 to 155 form a trp-rich region, which is important for the binding to lipid membrane region; the sequence is SIPFDYNLYSNWWNVK. The short motif at 179–181 is the Cell attachment site, crucial for protein stability element; that stretch reads RGD.

It belongs to the actinoporin family. Sea anemone subfamily. In terms of assembly, octamer or nonamer in membranes. Monomer in the soluble state.

Its subcellular location is the secreted. It localises to the nematocyst. The protein resides in the target cell membrane. Pore-forming protein that forms cations-selective hydrophilic pores of around 1 nm and causes cytolysis. Pore formation is a multi-step process that involves specific recognition of membrane sphingomyelin (but neither cholesterol nor phosphatidylcholine) using aromatic rich region and adjacent phosphocholine (POC) binding site, firm binding to the membrane (mainly driven by hydrophobic interactions) accompanied by the transfer of the N-terminal region to the lipid-water interface and finally pore formation after oligomerization of monomers. The polypeptide is DELTA-actitoxin-Aeq1b (Actinia equina (Beadlet anemone)).